We begin with the raw amino-acid sequence, 359 residues long: Fructose-bisphosphate aldolase (359 aa).

Thr-11 carries the post-translational modification Phosphothreonine. Lys-27 is covalently cross-linked (Glycyl lysine isopeptide (Lys-Gly) (interchain with G-Cter in ubiquitin)). Phosphoserine is present on residues Ser-56 and Ser-63. Ser-63 serves as a coordination point for D-glyceraldehyde 3-phosphate. Lys-73 participates in a covalent cross-link: Glycyl lysine isopeptide (Lys-Gly) (interchain with G-Cter in ubiquitin). Phosphoserine occurs at positions 76 and 83. Lys-85 is covalently cross-linked (Glycyl lysine isopeptide (Lys-Gly) (interchain with G-Cter in ubiquitin)). The residue at position 96 (Ser-96) is a Phosphoserine. Asp-110 serves as the catalytic Proton donor. His-111 and Asp-145 together coordinate Zn(2+). Residue Ser-147 is modified to Phosphoserine. A Phosphothreonine modification is found at Thr-150. A Zn(2+)-binding site is contributed by Glu-175. Phosphothreonine is present on Thr-179. Position 227 (His-227) interacts with Zn(2+). Gly-228 lines the dihydroxyacetone phosphate pocket. His-265 contacts Zn(2+). Dihydroxyacetone phosphate-binding positions include 266 to 268 (GGS) and 287 to 290 (NLDT). Ser-268 is subject to Phosphoserine. Thr-290 carries the post-translational modification Phosphothreonine. Lys-308 participates in a covalent cross-link: Glycyl lysine isopeptide (Lys-Gly) (interchain with G-Cter in ubiquitin). Tyr-310 is subject to Phosphotyrosine. Ser-313 carries the phosphoserine modification.

The protein belongs to the class II fructose-bisphosphate aldolase family. Homodimer. It depends on Zn(2+) as a cofactor.

The enzyme catalyses beta-D-fructose 1,6-bisphosphate = D-glyceraldehyde 3-phosphate + dihydroxyacetone phosphate. Its pathway is carbohydrate degradation; glycolysis; D-glyceraldehyde 3-phosphate and glycerone phosphate from D-glucose: step 4/4. In terms of biological role, catalyzes the aldol condensation of dihydroxyacetone phosphate (DHAP or glycerone-phosphate) with glyceraldehyde 3-phosphate (G3P) to form fructose 1,6-bisphosphate (FBP) in gluconeogenesis and the reverse reaction in glycolysis. The sequence is that of Fructose-bisphosphate aldolase (FBA1) from Saccharomyces cerevisiae (strain ATCC 204508 / S288c) (Baker's yeast).